The primary structure comprises 402 residues: S-adenosylmethionine synthase (402 aa).

His17 is a binding site for ATP. Asp19 is a binding site for Mg(2+). Residue Glu45 coordinates K(+). L-methionine-binding residues include Glu58 and Gln101. The tract at residues 101–111 is flexible loop; that stretch reads QSSDIADGVNE. Residues 177-179, 244-245, Asp253, 259-260, Ala276, and Lys280 each bind ATP; these read DAK, RF, and RK. Asp253 is an L-methionine binding site. Lys284 is an L-methionine binding site.

The protein belongs to the AdoMet synthase family. Homotetramer; dimer of dimers. Mg(2+) serves as cofactor. It depends on K(+) as a cofactor.

It localises to the cytoplasm. The catalysed reaction is L-methionine + ATP + H2O = S-adenosyl-L-methionine + phosphate + diphosphate. It functions in the pathway amino-acid biosynthesis; S-adenosyl-L-methionine biosynthesis; S-adenosyl-L-methionine from L-methionine: step 1/1. Catalyzes the formation of S-adenosylmethionine (AdoMet) from methionine and ATP. The overall synthetic reaction is composed of two sequential steps, AdoMet formation and the subsequent tripolyphosphate hydrolysis which occurs prior to release of AdoMet from the enzyme. The chain is S-adenosylmethionine synthase from Lactobacillus johnsonii (strain CNCM I-12250 / La1 / NCC 533).